The sequence spans 198 residues: Recombination protein RecR (198 aa).

The C4-type zinc finger occupies 57-72; that stretch reads CLNCGCLTDEAACYFC. The Toprim domain occupies 80-175; sequence QIICVTAFPR…QISRLAFGLP (96 aa).

Belongs to the RecR family.

May play a role in DNA repair. It seems to be involved in an RecBC-independent recombinational process of DNA repair. It may act with RecF and RecO. The protein is Recombination protein RecR of Protochlamydia amoebophila (strain UWE25).